Consider the following 85-residue polypeptide: Translation initiation factor IF-1 (85 aa).

One can recognise an S1-like domain in the interval 1–72 (MAKEELLEMR…TKARITYRFM (72 aa)).

This sequence belongs to the IF-1 family. Component of the 30S ribosomal translation pre-initiation complex which assembles on the 30S ribosome in the order IF-2 and IF-3, IF-1 and N-formylmethionyl-tRNA(fMet); mRNA recruitment can occur at any time during PIC assembly.

The protein resides in the cytoplasm. In terms of biological role, one of the essential components for the initiation of protein synthesis. Stabilizes the binding of IF-2 and IF-3 on the 30S subunit to which N-formylmethionyl-tRNA(fMet) subsequently binds. Helps modulate mRNA selection, yielding the 30S pre-initiation complex (PIC). Upon addition of the 50S ribosomal subunit IF-1, IF-2 and IF-3 are released leaving the mature 70S translation initiation complex. The protein is Translation initiation factor IF-1 of Erythrobacter litoralis (strain HTCC2594).